The chain runs to 130 residues: uncharacterized protein (130 aa).

The chain crosses the membrane as a helical span at residues 15-31 (LYLCPAIIRLSSVCTLA).

The protein resides in the membrane. This is an uncharacterized protein from Saccharomyces cerevisiae (strain ATCC 204508 / S288c) (Baker's yeast).